The following is a 488-amino-acid chain: MTAEQLPPELQRVHMVGIGGAGMAGIARILLDRGGLVSGSDAKESRGVHALRARGALIRIGHDASALDLLPGGVTSVITTHAAIPKTNPELVEARRRGVPVMLRPVVLAKLMDGRITVMVTGTHGKTTTTSMAIVALQHCGRDPSFAVGGELGEAGTNAHHGSGDYFVAEADESDGSLLEYTPHVAVVTNIEADHLDFYGSTEAYVGVFDAFVERLAPGGALVVCADDPGSAALAERSAELGIRVLRYGSAGHAGAALAATLVSWEQRGTGAVAQIQLAGEADPRSMRLSVPGRHMALNVLGALLAAIEVGAPVGEVLDGLAGFEGVRRRFELVGTAESVRVFDDYAHHPTEVRATLEAVRSVVRQSGSGRLLVVFQPHLYSRTKAFAAEFGSALDAADEVFVLDVYAAREQPLTGISGASVAEHVTVPVRYLRDFSAVAEVVAAAAGPGDVVVTMGAGDVTLLGPEIVAALRMRADRSEPGRPGVLQ.

122–128 contributes to the ATP binding site; that stretch reads GTHGKTT.

The protein belongs to the MurCDEF family.

The protein localises to the cytoplasm. It carries out the reaction UDP-N-acetyl-alpha-D-muramate + L-alanine + ATP = UDP-N-acetyl-alpha-D-muramoyl-L-alanine + ADP + phosphate + H(+). Its pathway is cell wall biogenesis; peptidoglycan biosynthesis. Cell wall formation. The sequence is that of UDP-N-acetylmuramate--L-alanine ligase from Mycobacterium ulcerans (strain Agy99).